Here is a 102-residue protein sequence, read N- to C-terminus: Small ribosomal subunit protein uS10 (102 aa).

The protein belongs to the universal ribosomal protein uS10 family. As to quaternary structure, part of the 30S ribosomal subunit.

In terms of biological role, involved in the binding of tRNA to the ribosomes. The polypeptide is Small ribosomal subunit protein uS10 (Streptococcus pneumoniae (strain CGSP14)).